The sequence spans 481 residues: Glutamine synthetase (481 aa).

In terms of domain architecture, GS beta-grasp spans 22–106 (NEVEFVDFRF…VFCDVYDVYK (85 aa)). Positions 114 to 481 (PRSIAKKALQ…PFEFITTYSC (368 aa)) constitute a GS catalytic domain. Positions 139, 141, 223, and 230 each coordinate Mg(2+). L-glutamate is bound by residues 274–275 (NG) and glycine 275. Histidine 279 is a binding site for Mg(2+). Residues 281–283 (HVS) and serine 283 each bind ATP. L-glutamate is bound by residues arginine 331, glutamate 337, and arginine 349. The ATP site is built by arginine 349 and arginine 354. Glutamate 367 is a binding site for Mg(2+). Arginine 369 lines the L-glutamate pocket.

Belongs to the glutamine synthetase family. In terms of assembly, oligomer of 12 subunits arranged in the form of two hexameric ring. The cofactor is Mg(2+).

The protein resides in the cytoplasm. It carries out the reaction L-glutamate + NH4(+) + ATP = L-glutamine + ADP + phosphate + H(+). Its activity is regulated as follows. The activity of this enzyme could be controlled by adenylation under conditions of abundant glutamine. Functionally, catalyzes the ATP-dependent biosynthesis of glutamine from glutamate and ammonia. This Helicobacter pylori (strain ATCC 700392 / 26695) (Campylobacter pylori) protein is Glutamine synthetase.